The primary structure comprises 328 residues: P2Y purinoceptor 6 (328 aa).

Over 1–27 (MEQDNGTIQAPGLPPTTCVYREDFKRL) the chain is Extracellular. An N-linked (GlcNAc...) asparagine glycan is attached at Asn5. A helical membrane pass occupies residues 28–48 (LLTPVYSVVLVVGLPLNICVI). At 49–62 (AQICASRRTLTRSA) the chain is on the cytoplasmic side. The chain crosses the membrane as a helical span at residues 63-83 (VYTLNLALADLMYACSLPLLI). The Extracellular portion of the chain corresponds to 84–101 (YNYARGDHWPFGDLACRF). A disulfide bridge connects residues Cys99 and Cys177. The chain crosses the membrane as a helical span at residues 102–122 (VRFLFYANLHGSILFLTCISF). The Cytoplasmic segment spans residues 123–144 (QRYLGICHPLASWHKRGGRRAA). Residues 145–165 (WVVCGVVWLAVTAQCLPTAVF) traverse the membrane as a helical segment. At 166 to 194 (AATGIQRNRTVCYDLSPPILSTRYLPYGM) the chain is on the extracellular side. The N-linked (GlcNAc...) asparagine glycan is linked to Asn173. The helical transmembrane segment at 195-215 (ALTVIGFLLPFIALLACYCRM) threads the bilayer. Topologically, residues 216–236 (ARRLCRQDGPAGPVAQERRSK) are cytoplasmic. The helical transmembrane segment at 237 to 257 (AARMAVVVAAVFAISFLPFHI) threads the bilayer. Residues 258–280 (TKTAYLAVRSTPGVSCPVLETFA) are Extracellular-facing. A helical transmembrane segment spans residues 281–303 (AAYKGTRPFASVNSVLDPILFYF). At 304–328 (TQQKFRRQPHDLLQRLTAKWQRQRV) the chain is on the cytoplasmic side.

The protein belongs to the G-protein coupled receptor 1 family.

It is found in the cell membrane. Its function is as follows. Receptor for extracellular UTP &gt; ADP = 2-methylthio-ATP &gt; ADP-beta-S &gt; ATP = ATP-gamma-S. The activity of this receptor is mediated by G proteins which activate a phosphatidylinositol-calcium second messenger system. Functionally coupled to phospholipase C. In Mus musculus (Mouse), this protein is P2Y purinoceptor 6 (P2ry6).